We begin with the raw amino-acid sequence, 614 residues long: Adenylate kinase 7 (614 aa).

The tract at residues 258–503 (PIKICILGPP…KEIGKPRNYG (246 aa)) is adenylate kinase. 268 to 273 (AVGKSS) is an ATP binding site. Residues 288 to 346 (KMKDVIAEAIAKLEAIVAPKDSVEGEEEGEEEEEEENVDDAQELLDGIKESMEQNAGRL) are NMP. The segment at 308–327 (DSVEGEEEGEEEEEEENVDD) is disordered. Positions 311-327 (EGEEEGEEEEEEENVDD) are enriched in acidic residues. AMP contacts are provided by residues 323-346 (ENVDDAQELLDGIKESMEQNAGRL), 373-376 (GFPK), and Q380. Residues 376–568 (KTYDQAKDLF…EERELLEVQS (193 aa)) are a coiled coil. An LID region spans residues 428 to 438 (NLPESVVAGTH). R446 serves as a coordination point for AMP. G478 contributes to the ATP binding site. A DPY-30 region spans residues 570-614 (PLRNYLMTYVMPTLMQGLNECCKVRPEDPVDFLAEYLFKNNPEMQ).

It in the central section; belongs to the adenylate kinase family. This sequence in the C-terminal section; belongs to the dpy-30 family.

The protein resides in the cytoplasm. The protein localises to the cytosol. It localises to the cell projection. It is found in the cilium. Its subcellular location is the flagellum. It catalyses the reaction AMP + ATP = 2 ADP. The enzyme catalyses a 2'-deoxyribonucleoside 5'-diphosphate + ATP = a 2'-deoxyribonucleoside 5'-triphosphate + ADP. It carries out the reaction a ribonucleoside 5'-diphosphate + ATP = a ribonucleoside 5'-triphosphate + ADP. Its function is as follows. Nucleoside monophosphate (NMP) kinase that catalyzes the reversible transfer of the terminal phosphate group between nucleoside triphosphates and monophosphates. Has highest activity toward AMP, and weaker activity toward dAMP, CMP and dCMP. Also displays broad nucleoside diphosphate kinase activity. Involved in maintaining ciliary structure and function. The sequence is that of Adenylate kinase 7 (Ak7) from Mus musculus (Mouse).